The chain runs to 152 residues: Small ribosomal subunit protein uS5 (152 aa).

The region spanning 14-77 is the S5 DRBM domain; it reads FEEVIVNIGR…DDAHKNLVKV (64 aa).

This sequence belongs to the universal ribosomal protein uS5 family. As to quaternary structure, part of the 30S ribosomal subunit. Contacts proteins S4 and S8.

With S4 and S12 plays an important role in translational accuracy. Its function is as follows. Located at the back of the 30S subunit body where it stabilizes the conformation of the head with respect to the body. The chain is Small ribosomal subunit protein uS5 from Sulfurovum sp. (strain NBC37-1).